Here is a 55-residue protein sequence, read N- to C-terminus: Large ribosomal subunit protein bL33 (55 aa).

It belongs to the bacterial ribosomal protein bL33 family.

The polypeptide is Large ribosomal subunit protein bL33 (Edwardsiella ictaluri (strain 93-146)).